Consider the following 48-residue polypeptide: Thiamine thiazole synthase, chloroplastic (48 aa).

Residues A18 and V40 each contribute to the substrate site.

The protein belongs to the THI4 family. In terms of assembly, homooctamer. The cofactor is Fe cation.

The protein resides in the plastid. Its subcellular location is the chloroplast. The catalysed reaction is [ADP-thiazole synthase]-L-cysteine + glycine + NAD(+) = [ADP-thiazole synthase]-dehydroalanine + ADP-5-ethyl-4-methylthiazole-2-carboxylate + nicotinamide + 3 H2O + 2 H(+). Functionally, involved in biosynthesis of the thiamine precursor thiazole. Catalyzes the conversion of NAD and glycine to adenosine diphosphate 5-(2-hydroxyethyl)-4-methylthiazole-2-carboxylic acid (ADT), an adenylated thiazole intermediate. The reaction includes an iron-dependent sulfide transfer from a conserved cysteine residue of the protein to a thiazole intermediate. The enzyme can only undergo a single turnover, which suggests it is a suicide enzyme. May have additional roles in adaptation to various stress conditions and in DNA damage tolerance. The sequence is that of Thiamine thiazole synthase, chloroplastic (THI1) from Populus euphratica (Euphrates poplar).